The primary structure comprises 180 residues: NAD(P)H-quinone oxidoreductase subunit I, chloroplastic (180 aa).

2 consecutive 4Fe-4S ferredoxin-type domains span residues 55–84 (GRIH…VDWR) and 95–124 (LNYS…MTEE). [4Fe-4S] cluster-binding residues include cysteine 64, cysteine 67, cysteine 70, cysteine 74, cysteine 104, cysteine 107, cysteine 110, and cysteine 114.

The protein belongs to the complex I 23 kDa subunit family. NDH is composed of at least 16 different subunits, 5 of which are encoded in the nucleus. The cofactor is [4Fe-4S] cluster.

It is found in the plastid. It localises to the chloroplast thylakoid membrane. It catalyses the reaction a plastoquinone + NADH + (n+1) H(+)(in) = a plastoquinol + NAD(+) + n H(+)(out). The enzyme catalyses a plastoquinone + NADPH + (n+1) H(+)(in) = a plastoquinol + NADP(+) + n H(+)(out). In terms of biological role, NDH shuttles electrons from NAD(P)H:plastoquinone, via FMN and iron-sulfur (Fe-S) centers, to quinones in the photosynthetic chain and possibly in a chloroplast respiratory chain. The immediate electron acceptor for the enzyme in this species is believed to be plastoquinone. Couples the redox reaction to proton translocation, and thus conserves the redox energy in a proton gradient. The protein is NAD(P)H-quinone oxidoreductase subunit I, chloroplastic of Agrostis stolonifera (Creeping bentgrass).